The sequence spans 121 residues: Small ribosomal subunit protein uS13 (121 aa).

The segment at Arg93 to Lys121 is disordered. Residues Lys110–Lys121 show a composition bias toward basic residues.

Belongs to the universal ribosomal protein uS13 family. In terms of assembly, part of the 30S ribosomal subunit. Forms a loose heterodimer with protein S19. Forms two bridges to the 50S subunit in the 70S ribosome.

Functionally, located at the top of the head of the 30S subunit, it contacts several helices of the 16S rRNA. In the 70S ribosome it contacts the 23S rRNA (bridge B1a) and protein L5 of the 50S subunit (bridge B1b), connecting the 2 subunits; these bridges are implicated in subunit movement. Contacts the tRNAs in the A and P-sites. The sequence is that of Small ribosomal subunit protein uS13 from Blochmanniella pennsylvanica (strain BPEN).